Here is a 57-residue protein sequence, read N- to C-terminus: Thiocillin GE37468 (57 aa).

Positions 1–42 (MGNNEEYFIDVNDLSIDVFDVVEQGGAVTALTADHGMPEVGA) are cleaved as a propeptide — removed in mature form. The segment at residues 43 to 44 (ST) is a cross-link (5-methyloxazole-4-carboxylic acid (Ser-Thr)). Positions 43–52 (STNCFCYICC) form a cross-link, pyridine-2,5-dicarboxylic acid (Ser-Cys) (with S-53). The segment at residues 43-53 (STNCFCYICCS) is a cross-link (pyridine-2,5-dicarboxylic acid (Ser-Ser) (with C-52)). The thiazole-4-carboxylic acid (Asn-Cys) cross-link spans 45–46 (NC). The thiazoline-4-carboxylic acid (Phe-Cys) cross-link spans 47 to 48 (FC). 5-hydroxy-3-methylproline (Ile) is present on I50. Residues 50–51 (IC) constitute a cross-link (thiazole-4-carboxylic acid (Ile-Cys)). Residues 51 to 52 (CC) constitute a cross-link (thiazole-4-carboxylic acid (Cys-Cys)). Residues 53–54 (SC) constitute a cross-link (thiazole-4-carboxylic acid (Ser-Cys)). A 2,3-didehydroalanine (Ser) mark is found at S55 and S56. N57 is a propeptide (removed in mature form).

In terms of processing, maturation of thiazole and oxazole containing antibiotics involves the enzymatic condensation of a Cys, Ser or Thr with the alpha-carbonyl of the preceding amino acid to form a thioether or ether bond, then dehydration to form a double bond with the alpha-amino nitrogen. Thiazoline or oxazoline ring are dehydrogenated to form thiazole or oxazole rings. Maturation of pyridinyl containing antibiotics involves the cross-linking of a Ser and a Cys-Ser pair usually separated by 7 or 8 residues along the peptide chain. The Ser residues are dehydrated to didehydroalanines, then bonded between their beta carbons. The alpha carbonyl of the Cys condenses with alpha carbon of the first Ser to form a pyridinyl ring. The ring may be multiply dehydrogenated to form a pyridine ring with loss of the amino nitrogen of the first Ser.

It localises to the secreted. Has bacteriocidal activity against both aerobic and anaerobic Gram-positive bacteria. Inhibits growth of B.subtilis (MIC=0.047 ug/ml) and methicillin-resistant S.aureus (MRSA) (MIC=0.047 ug/ml). Has poor activity against Gram-negative bacteria, with the exception of B.fragilis. Inhibits bacterial protein biosynthesis by acting on elongation factor Tu (EF-Tu). Full antibiotic activity depends on the presence of the modified residue Ile-50. The polypeptide is Thiocillin GE37468 (getA) (Streptomyces sp).